A 137-amino-acid chain; its full sequence is Large ribosomal subunit protein uL16 (137 aa).

This sequence belongs to the universal ribosomal protein uL16 family. In terms of assembly, part of the 50S ribosomal subunit.

In terms of biological role, binds 23S rRNA and is also seen to make contacts with the A and possibly P site tRNAs. In Maricaulis maris (strain MCS10) (Caulobacter maris), this protein is Large ribosomal subunit protein uL16.